The sequence spans 2016 residues: Cell adhesion molecule Dscam1 (2016 aa).

A signal peptide spans 1-28 (MNMPNERLKWLMLFAAVALIACGSQTLA). The Extracellular portion of the chain corresponds to 29–1618 (ANPPDADQKG…TIRIILSNLN (1590 aa)). Ig-like C2-type domains lie at 39-134 (PVFL…VHVR), 138-230 (AQYY…TRLS), 247-338 (PKIN…TVLT), 342-421 (PLSA…AELK), 428-522 (PPVI…AKLN), 527-613 (PYIR…LEVQ), 618-712 (PQVL…LQVN), 715-807 (PRWI…IMIS), and 812-904 (PEFT…ASIN). A glycan (N-linked (GlcNAc...) asparagine) is linked at Asn-53. Residues Cys-61 and Cys-117 are joined by a disulfide bond. Positions 144, 146, and 161 each coordinate Zn(2+). 13 cysteine pairs are disulfide-bonded: Cys-160/Cys-217, Cys-160/Thr-219, Cys-160/Lys-220, Cys-269/Cys-322, Pro-270/Val-323, Ala-276/Gly-329, Cys-364/Cys-405, Cys-450/Cys-506, Cys-547/Cys-596, Cys-640/Cys-694, Val-641/Cys-694, Val-641/Ile-695, and Cys-736/Cys-790. N-linked (GlcNAc...) asparagine glycosylation occurs at Asn-325. Residues Asn-492 and Asn-577 are each glycosylated (N-linked (GlcNAc...) asparagine). Asn-820 is a glycosylation site (N-linked (GlcNAc...) asparagine). Cysteines 833 and 890 form a disulfide. Fibronectin type-III domains are found at residues 913–1007 (MPYA…TAEE), 1012–1116 (KPQN…TPSQ), 1117–1213 (PPSD…TEPD), and 1217–1310 (APTD…PSDQ). 3 N-linked (GlcNAc...) asparagine glycosylation sites follow: Asn-1022, Asn-1055, and Asn-1186. Positions 1312-1394 (PAKIASFDDT…ENSIAKDSIT (83 aa)) constitute an Ig-like C2-type 10 domain. Cys-1334 and Cys-1382 are joined by a disulfide. Fibronectin type-III domains follow at residues 1402 to 1495 (PPQS…TKGQ) and 1499 to 1594 (LPEK…TGGT). The chain crosses the membrane as a helical span at residues 1619–1639 (LVVPVVAALLVIIIAIIVICI). The Cytoplasmic segment spans residues 1640-2016 (LRSKGNHHKD…GFTAYDTMAV (377 aa)). The PXXP motif 1; SH3-binding motif lies at 1685–1688 (PPVP). The disordered stretch occupies residues 1688–1719 (PGSNYNTCDRIKRGRGGLRSNHSTWDPRRNPN). Positions 1727–1730 (PPVP) match the PXXP motif 2; SH3-binding motif. Disordered regions lie at residues 1787 to 1846 (GHAG…DDPA) and 1862 to 2016 (SQGG…TMAV). Polar residues predominate over residues 1826 to 1836 (KNSQGGQSSIY). A YXXP motif 1; potential SH2-binding motif is present at residues 1842–1845 (YDDP). A YXXP motif 2; potential SH2-binding motif is present at residues 1875-1878 (YDDP). The segment covering 1897-1918 (GQPYDHYGSRGSMGRRSIGSAR) has biased composition (low complexity). The short motif at 1925–1932 (PEPPPPPP) is the Polyproline tract (probable SH3-binding) element. Basic and acidic residues-rich tracts occupy residues 1944–1962 (DSKE…DHGP) and 1974–1993 (QPKD…RNET). The span at 1994–2004 (GPKQLQLQQAN) shows a compositional bias: polar residues.

In terms of assembly, homodimer (via extracellular region); alternative splicing produces a potential 19,008 different ectodomains and the majority of these show strong isoform-specific homodimerization. Interacts (via cytoplasmic domain) with dock/dreadlocks (via SH2 and SH3 domains); the interaction is direct and may require Dscam1 to be phosphorylated. Phosphorylated on tyrosine residues in the intracellular domain. Tyrosine protein kinase Src42A and possibly Src64B are involved in this phosphorylation. In terms of processing, glycosylation on Asn-53 and Asn-325 is involved in stabilizing dimerization. Post-translationally, proteolytically processed, probably to generate a secreted form. In terms of tissue distribution, secreted into the hemolymph (at protein level). Expressed in brain and eye-antennal imaginal disks, including R3/R4 and R7 photoreceptor cells. Individual R3/R4 cells express between 14 and 50 randomly generated mRNAs encoding distinct isoforms.

The protein resides in the cell membrane. It is found in the cell projection. Its subcellular location is the neuron projection. It localises to the axon. The protein localises to the perikaryon. The protein resides in the dendrite. It is found in the secreted. Cell surface receptor involved in guidance and targeting of growing nerve axons. Required during Bolwig's organ differentiation for accurate and efficient targeting of photoreceptor neuron axons to their synaptic targets in the brain via the P2 intermediate target neuron. Involved in isoneural self-avoidance during dendrite arborization but not in heteroneural recognition and repulsion during tiling by related neurons of the same class. Involved in regulating axon bifurcation and divergent extension in the developing mushroom body. Essential for axon arborisation in ellipsoid body. Exhibits an extraordinary level of molecular diversity resulting from alternative splicing. Isoforms differing in their ectodomain makeup show a high degree of functional redundancy while isoforms with different transmembrane domains are involved in different neuronal morphogenetic processes and are differentially targeted to dendrites or axons. The vast majority of isoforms exhibit strong isoform-specific homophilic binding. Individual cells express a distinct randomly generated repertoire of isoforms. Cell surfaces bearing identical repertoires of Dscam1 isoforms, such as those from the same cell, trigger recognition and avoidance. A subset of isoforms is expressed in fat body cells and hemocytes, cells that are part of the insect immune response, and these isoforms are secreted into the hemolymph. The secreted form comprising the ectodomain can bind to bacteria, such as Escherichia coli, and may act as an opsonin enhancing their phagocytosis by hemocytes. The polypeptide is Cell adhesion molecule Dscam1 (Drosophila melanogaster (Fruit fly)).